We begin with the raw amino-acid sequence, 146 residues long: D-aminoacyl-tRNA deacylase (146 aa).

Residues 137–138 carry the Gly-cisPro motif, important for rejection of L-amino acids motif; that stretch reads GP.

Belongs to the DTD family. Homodimer.

The protein resides in the cytoplasm. It catalyses the reaction glycyl-tRNA(Ala) + H2O = tRNA(Ala) + glycine + H(+). It carries out the reaction a D-aminoacyl-tRNA + H2O = a tRNA + a D-alpha-amino acid + H(+). In terms of biological role, an aminoacyl-tRNA editing enzyme that deacylates mischarged D-aminoacyl-tRNAs. Also deacylates mischarged glycyl-tRNA(Ala), protecting cells against glycine mischarging by AlaRS. Acts via tRNA-based rather than protein-based catalysis; rejects L-amino acids rather than detecting D-amino acids in the active site. By recycling D-aminoacyl-tRNA to D-amino acids and free tRNA molecules, this enzyme counteracts the toxicity associated with the formation of D-aminoacyl-tRNA entities in vivo and helps enforce protein L-homochirality. The protein is D-aminoacyl-tRNA deacylase of Cellvibrio japonicus (strain Ueda107) (Pseudomonas fluorescens subsp. cellulosa).